Reading from the N-terminus, the 295-residue chain is Giardin subunit alpha-1 (295 aa).

Annexin repeat units follow at residues 2-71 (PKVT…MDLF), 73-143 (DRHE…MEKW), 153-223 (GSPE…AHFA), and 226-293 (GMHR…TLWR).

It belongs to the annexin family. Giardin subunit alpha subfamily.

The protein localises to the cytoplasm. The protein resides in the cytoskeleton. In terms of biological role, giardins are involved in parasite attachment to the intestinal mucosa and in the cytoskeletal disassembly and reassembly that marks the transition from infectious trophozoite to transmissible cyst. They may interact with other cytoskeletal proteins such as microtubules in the microribbons or crossbridges, to maintain the integrity of the ventral disk. The protein is Giardin subunit alpha-1 of Giardia intestinalis (Giardia lamblia).